A 1780-amino-acid polypeptide reads, in one-letter code: Protein TIC 214 (1780 aa).

The next 6 membrane-spanning stretches (helical) occupy residues 19–39 (IINSVVVVGLYYGFLTTFSIG), 68–88 (FIAGQLMMFISIYYAPLHLAL), 91–111 (PHTITVLALPYLLFHFFWNNN), 133–153 (VFLNNLIFQLFNHFILPSSML), 176–196 (VGWLIGHILFMKWVGLVLVWI), and 227–247 (IFSILLFITCVYYLGRTPSPI). Positions 251-275 (KLKGTSETEERGGTKQDQEVSTEEA) are disordered. Positions 254–268 (GTSETEERGGTKQDQ) are enriched in basic and acidic residues.

Belongs to the TIC214 family. In terms of assembly, part of the Tic complex.

It is found in the plastid. Its subcellular location is the chloroplast inner membrane. Its function is as follows. Involved in protein precursor import into chloroplasts. May be part of an intermediate translocation complex acting as a protein-conducting channel at the inner envelope. The polypeptide is Protein TIC 214 (Draba nemorosa (Woodland whitlowgrass)).